Reading from the N-terminus, the 198-residue chain is Probable GTP-binding protein EngB (198 aa).

Positions 22–195 (DLPEIALAGR…WKAIHKFTKT (174 aa)) constitute an EngB-type G domain. Residues 30-37 (GRSNVGKS), 57-61 (GKTQT), 75-78 (DVPG), 142-145 (TKAD), and 174-176 (FSS) contribute to the GTP site. Mg(2+) is bound by residues Ser-37 and Thr-59.

The protein belongs to the TRAFAC class TrmE-Era-EngA-EngB-Septin-like GTPase superfamily. EngB GTPase family. Requires Mg(2+) as cofactor.

Necessary for normal cell division and for the maintenance of normal septation. This chain is Probable GTP-binding protein EngB, found in Bacillus cytotoxicus (strain DSM 22905 / CIP 110041 / 391-98 / NVH 391-98).